A 182-amino-acid chain; its full sequence is uncharacterized protein (182 aa).

The segment covering 1–23 (MILSDQNFLQTQWKEPQTAQSKN) has biased composition (polar residues). Positions 1-33 (MILSDQNFLQTQWKEPQTAQSKNTESKCEFHGN) are disordered.

It belongs to the peptidase M24 family.

This is an uncharacterized protein from Caenorhabditis elegans.